Reading from the N-terminus, the 385-residue chain is MGVTLDLARAPAQPLAPSRPNLSGMTRAELAACLVELGVVRPEKAKMRASQLWRWMHHYGVTDFEKMTDVAKETRAALAEVCAISRPQVVERQVSKDGTRKWLIRMAPGIEVETVYIPDVGRAGALCVSSQVGCTLNCTFCHTGTQALVRNLTAAEIVAQVQVARDDLGEWPSPKEDRRLSNIVFMGMGEPLYNLDNVAAAIDIIADNEGIAISRRRITVSTSGVVPELAALGERTQAMLAISLHATNDELREKLVPLNRKYPIAELMAAIRAYPGLSNSKRVTFEYVMLKGVNDSPAEAKALVNLLKGVPAKINLIPFNPWPGSQYECSDWGTIERFAAVLNRAGYASPIRTPRGRDILAACGQLKSESEKLRASARRKLAAGG.

The Proton acceptor role is filled by Glu-113. The 233-residue stretch at 120–352 (VGRAGALCVS…NRAGYASPIR (233 aa)) folds into the Radical SAM core domain. A disulfide bridge links Cys-127 with Cys-363. 3 residues coordinate [4Fe-4S] cluster: Cys-134, Cys-138, and Cys-141. S-adenosyl-L-methionine contacts are provided by residues 189-190 (GE), Ser-221, 243-245 (SLH), and Asn-320. Cys-363 acts as the S-methylcysteine intermediate in catalysis.

It belongs to the radical SAM superfamily. RlmN family. [4Fe-4S] cluster is required as a cofactor.

The protein resides in the cytoplasm. The catalysed reaction is adenosine(2503) in 23S rRNA + 2 reduced [2Fe-2S]-[ferredoxin] + 2 S-adenosyl-L-methionine = 2-methyladenosine(2503) in 23S rRNA + 5'-deoxyadenosine + L-methionine + 2 oxidized [2Fe-2S]-[ferredoxin] + S-adenosyl-L-homocysteine. The enzyme catalyses adenosine(37) in tRNA + 2 reduced [2Fe-2S]-[ferredoxin] + 2 S-adenosyl-L-methionine = 2-methyladenosine(37) in tRNA + 5'-deoxyadenosine + L-methionine + 2 oxidized [2Fe-2S]-[ferredoxin] + S-adenosyl-L-homocysteine. Specifically methylates position 2 of adenine 2503 in 23S rRNA and position 2 of adenine 37 in tRNAs. m2A2503 modification seems to play a crucial role in the proofreading step occurring at the peptidyl transferase center and thus would serve to optimize ribosomal fidelity. This is Dual-specificity RNA methyltransferase RlmN from Phenylobacterium zucineum (strain HLK1).